Here is a 77-residue protein sequence, read N- to C-terminus: Protein AC145 (77 aa).

It localises to the host nucleus. The protein localises to the virion. Plays a role in primary oral infection of the host. This is Protein AC145 from Autographa californica nuclear polyhedrosis virus (AcMNPV).